Reading from the N-terminus, the 63-residue chain is Cecropin-A (63 aa).

The N-terminal stretch at 1–22 (MNFVRILSFVFALVLALGAVSA) is a signal peptide. Positions 23-26 (APEP) are excised as a propeptide. Leucine 61 carries the post-translational modification Leucine amide.

Belongs to the cecropin family. As to expression, highest expression in fat body and hemocytes. Is also expressed in Malpighian tubules and to a much lesser extent in midgut. Not present in silk gland.

Its subcellular location is the secreted. Functionally, cecropins have lytic and antibacterial activity against several Gram-positive and Gram-negative bacteria. In Bombyx mori (Silk moth), this protein is Cecropin-A (CECA).